Consider the following 2191-residue polypeptide: FRAS1-related extracellular matrix protein 1 (2191 aa).

Positions 1–29 (MHSPGCTGPKAQWFLLLQLLLLHLDRVSA) are cleaved as a signal peptide. The Cell attachment site motif lies at 205-207 (RGD). CSPG repeat units lie at residues 300-394 (VPRA…MELE), 419-506 (APRV…FRIF), and 527-621 (PPFL…FVLW). Asn341 carries N-linked (GlcNAc...) asparagine glycosylation. N-linked (GlcNAc...) asparagine glycans are attached at residues Asn566 and Asn628. 3 CSPG repeats span residues 648 to 779 (KEAP…VSVS), 801 to 892 (QVPE…LEVT), and 912 to 1007 (EPPI…LVVS). N-linked (GlcNAc...) asparagine glycosylation is present at Asn1039. 6 CSPG repeats span residues 1049–1151 (PPSI…VYAT), 1172–1273 (EAPD…IQLS), 1294–1391 (TPTL…FYLW), 1412–1504 (GDIV…FTIS), 1525–1614 (LPVL…FLAT), and 1650–1742 (HLHS…FQAM). Asn1180 is a glycosylation site (N-linked (GlcNAc...) asparagine). Asn1584 carries an N-linked (GlcNAc...) asparagine glycan. Residues 1749–1848 (ATPQSLDLRW…DDEVFEVILN (100 aa)) enclose the Calx-beta domain. Positions 1874 to 1921 (HPSNSFNQSKHSTWGKGPWHPLPSGSSSLTTSGSPLLERPPPSFTSGD) are disordered. The segment covering 1875–1885 (PSNSFNQSKHS) has biased composition (polar residues). The span at 1895–1910 (LPSGSSSLTTSGSPLL) shows a compositional bias: low complexity. One can recognise a C-type lectin domain in the interval 2072–2186 (HSGYCHILVT…CSKGKAHNFV (115 aa)). Cys2163 and Cys2177 are oxidised to a cystine.

The protein belongs to the FRAS1 family. As to quaternary structure, interacts with FREM2. In terms of tissue distribution, expressed in epidermis and hair follicles. Expressed in many developing epidermal appendages, including the whisker and sensory vibrissae, cranial and trunk hair follicles, meibomian glands, teeth, footpads, eyelash primordia and invaginating mammary glands. Limb expression localizes to sheets of dermal cells on the apical and basal surfaces of the digits but, unlike FRAS1, is excluded from the apical ectodermal ridge. Usually expressed at higher level in dermal cells underlying the differentiating epithelial components, especially underlying the epidermis of the head, limbs, and eyelids. Expression in the eyelid dermis is apparent as early as 13 dpc. Postnatal expression in the skin is limited to the dermal papillae. In the kidney, it is expressed from 12.5 dpc in the mesenchyme surrounding the branching ureteric tree, with a strong expression in the more proximal regions of these tubules rather than at the proliferating and branching ends of the ureteric buds. In hair follicle, it is selectively expressed in the vibrissal hair primordia during development. Preferentially expressed in the whisker pad epithelia of 12.5 dpc embryos, in both the epithelial and mesenchymal cells of developing hair follicles. In the early stages of hair follicle development (i.e. stages 0-1), it is expressed in both hair placodes and dermal condensations. In stage 2, it is detected in dermal condensations and adjacent epithelia, but not in the upper region of the hair follicles. Expressed at the tip of developing hair follicles in the later stages (i.e. stages 3-5).

The protein resides in the secreted. The protein localises to the extracellular space. It is found in the extracellular matrix. It localises to the basement membrane. Its function is as follows. Extracellular matrix protein that plays a role in epidermal differentiation and is required for epidermal adhesion during embryonic development. This is FRAS1-related extracellular matrix protein 1 (Frem1) from Mus musculus (Mouse).